A 310-amino-acid polypeptide reads, in one-letter code: MFNHVTVLLKETVDGLDIKPGGTYVDCTLGGGGHSSYLLSQLTEGGRLIAFDQDEIAIQNAKEKFSSYGEQFITVRSNFRYLSEKLQELGITEVDGILFDLGVSSPQLDTPERGFSYHHDAPLDMRMDQDAPLTAYDVVNSWSYEQLVRIFFQYGEEKFSKQIARKIEAYRENKAIETTGELVELIKEGIPAPARRTGGHPAKRVFQAIRIAVNDELKVFEEALESAIEMVKPGGRVSVITFHSLEDRICKTTFKRNSTTPQLPPGLPIIPDEFKPKLKLITRKPILPSDIELEENNRARSAKLRIAEKR.

S-adenosyl-L-methionine is bound by residues glycine 32–histidine 34, aspartate 52, phenylalanine 79, aspartate 100, and glutamine 107.

Belongs to the methyltransferase superfamily. RsmH family.

The protein localises to the cytoplasm. The catalysed reaction is cytidine(1402) in 16S rRNA + S-adenosyl-L-methionine = N(4)-methylcytidine(1402) in 16S rRNA + S-adenosyl-L-homocysteine + H(+). Specifically methylates the N4 position of cytidine in position 1402 (C1402) of 16S rRNA. The protein is Ribosomal RNA small subunit methyltransferase H of Bacillus cereus (strain AH187).